We begin with the raw amino-acid sequence, 427 residues long: Histidinol dehydrogenase (427 aa).

The NAD(+) site is built by Y127, Q187, and N210. 3 residues coordinate substrate: S233, Q255, and H258. Q255 and H258 together coordinate Zn(2+). Residues E323 and H324 each act as proton acceptor in the active site. Residues H324, D357, E411, and H416 each contribute to the substrate site. Residue D357 coordinates Zn(2+). H416 is a Zn(2+) binding site.

This sequence belongs to the histidinol dehydrogenase family. The cofactor is Zn(2+).

The enzyme catalyses L-histidinol + 2 NAD(+) + H2O = L-histidine + 2 NADH + 3 H(+). Its pathway is amino-acid biosynthesis; L-histidine biosynthesis; L-histidine from 5-phospho-alpha-D-ribose 1-diphosphate: step 9/9. In terms of biological role, catalyzes the sequential NAD-dependent oxidations of L-histidinol to L-histidinaldehyde and then to L-histidine. The polypeptide is Histidinol dehydrogenase (Streptococcus mutans serotype c (strain ATCC 700610 / UA159)).